The primary structure comprises 297 residues: Cyclin-dependent kinase 1 (297 aa).

Position 1 is an N-acetylmethionine (methionine 1). A Phosphotyrosine; by PKR modification is found at tyrosine 4. One can recognise a Protein kinase domain in the interval 4-287 (YTKIEKIGEG…GKMALNHPYF (284 aa)). 2 positions are modified to N6-acetyllysine; alternate: lysine 6 and lysine 9. Glycyl lysine isopeptide (Lys-Gly) (interchain with G-Cter in SUMO2); alternate cross-links involve residues lysine 6 and lysine 9. ATP is bound at residue 10–18 (IGEGTYGVV). Position 14 is a phosphothreonine; by PKMYT1 (threonine 14). Position 15 is a phosphotyrosine; by PKMYT1, WEE1, WEE2 and PKC/PRKCD (tyrosine 15). At tyrosine 19 the chain carries Phosphotyrosine. A Glycyl lysine isopeptide (Lys-Gly) (interchain with G-Cter in SUMO2) cross-link involves residue lysine 20. Lysine 33 lines the ATP pocket. A Phosphoserine modification is found at serine 39. Tyrosine 77 carries the post-translational modification Phosphotyrosine. The active-site Proton acceptor is aspartate 128. Lysine 139 is covalently cross-linked (Glycyl lysine isopeptide (Lys-Gly) (interchain with G-Cter in SUMO2)). Threonine 141 carries the phosphothreonine modification. Threonine 161 is subject to Phosphothreonine; by CAK. Serine 178 is modified (phosphoserine). Threonine 222 bears the Phosphothreonine mark. Lysine 245 bears the N6-succinyllysine mark. Serine 248 carries the phosphoserine modification.

It belongs to the protein kinase superfamily. CMGC Ser/Thr protein kinase family. CDC2/CDKX subfamily. Forms a stable but non-covalent complex with a regulatory subunit and with a cyclin. The cyclin subunit imparts substrate specificity to the complex. Interacts with cyclins-B (CCNB1, CCNB2 and CCNB3) to form a serine/threonine kinase holoenzyme complex also known as maturation promoting factor (MPF). Promotes G2-M transition when in complex with a cyclin-B. Can also form CDK1-cylin-D and CDK1-cyclin-E complexes that phosphorylate RB1 in vitro. Associates with cyclins-A and B1 during S-phase in regenerating hepatocytes. Interacts with DLGAP5. Binds to the CDK inhibitors CDKN1A/p21 and CDKN1B/p27. Interacts with catalytically active CCNB1 and RALBP1 during mitosis to form an endocytotic complex during interphase. Interacts with FANCC. Interacts with CEP63; this interaction recruits CDK1 to centrosomes. Interacts with CENPA. Interacts with NR1D1. Interacts with proteasome subunit PSMA8; to participate in meiosis progression during spermatogenesis. In terms of assembly, unable to complex with cyclin-B1 and also fails to bind to CDKN1A/p21. As to quaternary structure, (Microbial infection) Interacts with severe fever with thrombocytopenia syndrome virus (SFTSV) NSs; this interaction is inclusion body dependent, it inhibits the formation and nuclear import of the cyclin B1-CDK1 complex and leads to cell cycle arrest. Post-translationally, phosphorylation at Thr-161 by CAK/CDK7 activates kinase activity. Phosphorylation at Thr-14 and Tyr-15 by PKMYT1 prevents nuclear translocation. Phosphorylation at Tyr-15 by WEE1 and WEE2 inhibits the protein kinase activity and acts as a negative regulator of entry into mitosis (G2 to M transition). Phosphorylation by PKMYT1 and WEE1 takes place during mitosis to keep CDK1-cyclin-B complexes inactive until the end of G2. By the end of G2, PKMYT1 and WEE1 are inactivated, but CDC25A and CDC25B are activated. Dephosphorylation by active CDC25A and CDC25B at Thr-14 and Tyr-15, leads to CDK1 activation at the G2-M transition. Phosphorylation at Tyr-15 by WEE2 during oogenesis is required to maintain meiotic arrest in oocytes during the germinal vesicle (GV) stage, a long period of quiescence at dictyate prophase I, leading to prevent meiotic reentry. Phosphorylation by WEE2 is also required for metaphase II exit during egg activation to ensure exit from meiosis in oocytes and promote pronuclear formation. Phosphorylated at Tyr-4 by PKR/EIF2AK2 upon genotoxic stress. This phosphorylation triggers CDK1 polyubiquitination and subsequent proteolysis, thus leading to G2 arrest. In response to UV irradiation, phosphorylation at Tyr-15 by PRKCD activates the G2/M DNA damage checkpoint. In terms of processing, polyubiquitinated upon genotoxic stress. As to expression, found in breast cancer tissues.

It is found in the nucleus. It localises to the cytoplasm. Its subcellular location is the mitochondrion. The protein localises to the cytoskeleton. The protein resides in the microtubule organizing center. It is found in the centrosome. It localises to the spindle. The enzyme catalyses L-seryl-[protein] + ATP = O-phospho-L-seryl-[protein] + ADP + H(+). It catalyses the reaction L-threonyl-[protein] + ATP = O-phospho-L-threonyl-[protein] + ADP + H(+). The catalysed reaction is [DNA-directed RNA polymerase] + ATP = phospho-[DNA-directed RNA polymerase] + ADP + H(+). Its activity is regulated as follows. Phosphorylation at Thr-14 or Tyr-15 inactivates the enzyme, while phosphorylation at Thr-161 activates it. Activated through a multistep process; binding to cyclin-B is required for relocation of cyclin-kinase complexes to the nucleus, activated by CAK/CDK7-mediated phosphorylation on Thr-161, and CDC25-mediated dephosphorylation of inhibitory phosphorylation on Thr-14 and Tyr-15. Activity is restricted during S-phase in an ATR-dependent manner to prevent premature entry into G2. Repressed by the CDK inhibitors CDKN1A/p21 and CDKN1B/p27 during the G1 phase and by CDKN1A/p21 at the G1-S checkpoint upon DNA damage. Transient activation by rapid and transient dephosphorylation at Tyr-15 triggered by TGFB1. Inhibited by flavopiridol and derivatives, pyrimidine derivatives, pyridine derivatives, purine derivatives, staurosporine, paullones, oxoindoles, indazole analogs, indolin-2-ones, pyrazolo[3,4-b]pyridines, imidazo[1,2-a]pyridine (AZ703), thiazolinone analogs(RO-3306), thiazol urea, macrocyclic quinoxalin-2-one, pyrrolo[2,3-a]carbazole, pyrazolo[1,5-a]-1,3,5-triazine, pyrazolo[1,5-a]pyrimidine (Dinaciclib, SCH 727965), 2-(1-ethyl-2-hydroxyethylamino)-6-benzylamino-9-isopropylpurine (roscovitine), olomoucine, AG-024322, AT-7519, P276-00, R547/Ro-4584820 and SNS-032/BMS-387032. Functionally, plays a key role in the control of the eukaryotic cell cycle by modulating the centrosome cycle as well as mitotic onset; promotes G2-M transition via association with multiple interphase cyclins. Phosphorylates PARVA/actopaxin, APC, AMPH, APC, BARD1, Bcl-xL/BCL2L1, BRCA2, CALD1, CASP8, CDC7, CDC20, CDC25A, CDC25C, CC2D1A, CENPA, CSNK2 proteins/CKII, FZR1/CDH1, CDK7, CEBPB, CHAMP1, DMD/dystrophin, EEF1 proteins/EF-1, EZH2, KIF11/EG5, EGFR, FANCG, FOS, GFAP, GOLGA2/GM130, GRASP1, UBE2A/hHR6A, HIST1H1 proteins/histone H1, HMGA1, HIVEP3/KRC, KAT5, LMNA, LMNB, LBR, MKI67, LATS1, MAP1B, MAP4, MARCKS, MCM2, MCM4, MKLP1, MLST8, MYB, NEFH, NFIC, NPC/nuclear pore complex, PITPNM1/NIR2, NPM1, NCL, NUCKS1, NPM1/numatrin, ORC1, PRKAR2A, EEF1E1/p18, EIF3F/p47, p53/TP53, NONO/p54NRB, PAPOLA, PLEC/plectin, RB1, TPPP, UL40/R2, RAB4A, RAP1GAP, RBBP8/CtIP, RCC1, RPS6KB1/S6K1, KHDRBS1/SAM68, ESPL1, SKI, BIRC5/survivin, STIP1, TEX14, beta-tubulins, MAPT/TAU, NEDD1, VIM/vimentin, TK1, FOXO1, RUNX1/AML1, SAMHD1, SIRT2, CGAS and RUNX2. CDK1/CDC2-cyclin-B controls pronuclear union in interphase fertilized eggs. Essential for early stages of embryonic development. During G2 and early mitosis, CDC25A/B/C-mediated dephosphorylation activates CDK1/cyclin complexes which phosphorylate several substrates that trigger at least centrosome separation, Golgi dynamics, nuclear envelope breakdown and chromosome condensation. Once chromosomes are condensed and aligned at the metaphase plate, CDK1 activity is switched off by WEE1- and PKMYT1-mediated phosphorylation to allow sister chromatid separation, chromosome decondensation, reformation of the nuclear envelope and cytokinesis. Phosphorylates KRT5 during prometaphase and metaphase. Inactivated by PKR/EIF2AK2- and WEE1-mediated phosphorylation upon DNA damage to stop cell cycle and genome replication at the G2 checkpoint thus facilitating DNA repair. Reactivated after successful DNA repair through WIP1-dependent signaling leading to CDC25A/B/C-mediated dephosphorylation and restoring cell cycle progression. Catalyzes lamin (LMNA, LMNB1 and LMNB2) phosphorylation at the onset of mitosis, promoting nuclear envelope breakdown. In proliferating cells, CDK1-mediated FOXO1 phosphorylation at the G2-M phase represses FOXO1 interaction with 14-3-3 proteins and thereby promotes FOXO1 nuclear accumulation and transcription factor activity, leading to cell death of postmitotic neurons. The phosphorylation of beta-tubulins regulates microtubule dynamics during mitosis. NEDD1 phosphorylation promotes PLK1-mediated NEDD1 phosphorylation and subsequent targeting of the gamma-tubulin ring complex (gTuRC) to the centrosome, an important step for spindle formation. In addition, CC2D1A phosphorylation regulates CC2D1A spindle pole localization and association with SCC1/RAD21 and centriole cohesion during mitosis. The phosphorylation of Bcl-xL/BCL2L1 after prolongated G2 arrest upon DNA damage triggers apoptosis. In contrast, CASP8 phosphorylation during mitosis prevents its activation by proteolysis and subsequent apoptosis. This phosphorylation occurs in cancer cell lines, as well as in primary breast tissues and lymphocytes. EZH2 phosphorylation promotes H3K27me3 maintenance and epigenetic gene silencing. CALD1 phosphorylation promotes Schwann cell migration during peripheral nerve regeneration. CDK1-cyclin-B complex phosphorylates NCKAP5L and mediates its dissociation from centrosomes during mitosis. Regulates the amplitude of the cyclic expression of the core clock gene BMAL1 by phosphorylating its transcriptional repressor NR1D1, and this phosphorylation is necessary for SCF(FBXW7)-mediated ubiquitination and proteasomal degradation of NR1D1. Phosphorylates EML3 at 'Thr-881' which is essential for its interaction with HAUS augmin-like complex and TUBG1. Phosphorylates CGAS during mitosis, leading to its inhibition, thereby preventing CGAS activation by self DNA during mitosis. Phosphorylates SKA3 on multiple sites during mitosis which promotes SKA3 binding to the NDC80 complex and anchoring of the SKA complex to kinetochores, to enable stable attachment of mitotic spindle microtubules to kinetochores. (Microbial infection) Acts as a receptor for hepatitis C virus (HCV) in hepatocytes and facilitates its cell entry. The sequence is that of Cyclin-dependent kinase 1 (CDK1) from Homo sapiens (Human).